Reading from the N-terminus, the 527-residue chain is ATP synthase subunit alpha (527 aa).

Residue 172–179 participates in ATP binding; it reads GDRQTGKT.

It belongs to the ATPase alpha/beta chains family. F-type ATPases have 2 components, CF(1) - the catalytic core - and CF(0) - the membrane proton channel. CF(1) has five subunits: alpha(3), beta(3), gamma(1), delta(1), epsilon(1). CF(0) has three main subunits: a(1), b(2) and c(9-12). The alpha and beta chains form an alternating ring which encloses part of the gamma chain. CF(1) is attached to CF(0) by a central stalk formed by the gamma and epsilon chains, while a peripheral stalk is formed by the delta and b chains.

It localises to the cell inner membrane. The enzyme catalyses ATP + H2O + 4 H(+)(in) = ADP + phosphate + 5 H(+)(out). Produces ATP from ADP in the presence of a proton gradient across the membrane. The alpha chain is a regulatory subunit. This Bacteroides thetaiotaomicron (strain ATCC 29148 / DSM 2079 / JCM 5827 / CCUG 10774 / NCTC 10582 / VPI-5482 / E50) protein is ATP synthase subunit alpha.